The following is a 251-amino-acid chain: NADH-quinone oxidoreductase subunit B (251 aa).

[4Fe-4S] cluster is bound by residues Cys38, Cys39, Cys104, and Cys134. The disordered stretch occupies residues 208–251; it reads RKGLPPGSMTDVGWIPPEARERLKAGRGAGASGSGEREEGKEGA. A compositionally biased stretch (basic and acidic residues) spans 242–251; sequence GEREEGKEGA.

This sequence belongs to the complex I 20 kDa subunit family. As to quaternary structure, NDH-1 is composed of 14 different subunits. Subunits NuoB, C, D, E, F, and G constitute the peripheral sector of the complex. Requires [4Fe-4S] cluster as cofactor.

The protein resides in the cell membrane. The catalysed reaction is a quinone + NADH + 5 H(+)(in) = a quinol + NAD(+) + 4 H(+)(out). Functionally, NDH-1 shuttles electrons from NADH, via FMN and iron-sulfur (Fe-S) centers, to quinones in the respiratory chain. The immediate electron acceptor for the enzyme in this species is believed to be a menaquinone. Couples the redox reaction to proton translocation (for every two electrons transferred, four hydrogen ions are translocated across the cytoplasmic membrane), and thus conserves the redox energy in a proton gradient. This is NADH-quinone oxidoreductase subunit B from Rubrobacter xylanophilus (strain DSM 9941 / JCM 11954 / NBRC 16129 / PRD-1).